The chain runs to 78 residues: UPF0270 protein YPO0179/y3960/YP_0178 (78 aa).

Belongs to the UPF0270 family.

The polypeptide is UPF0270 protein YPO0179/y3960/YP_0178 (Yersinia pestis).